The following is a 385-amino-acid chain: A-type ATP synthase subunit C (385 aa).

This sequence belongs to the V-ATPase V0D/AC39 subunit family. In terms of assembly, has multiple subunits with at least A(3), B(3), C, D, E, F, H, I and proteolipid K(x).

It localises to the cell membrane. In terms of biological role, component of the A-type ATP synthase that produces ATP from ADP in the presence of a proton gradient across the membrane. The polypeptide is A-type ATP synthase subunit C (Methanosphaera stadtmanae (strain ATCC 43021 / DSM 3091 / JCM 11832 / MCB-3)).